The chain runs to 186 residues: Pyridoxal 5'-phosphate synthase subunit PdxT (186 aa).

47 to 49 (GES) is an L-glutamine binding site. Residue Cys-76 is the Nucleophile of the active site. Residues Arg-102 and 130 to 131 (IR) each bind L-glutamine. Residues His-166 and Glu-168 each act as charge relay system in the active site.

Belongs to the glutaminase PdxT/SNO family. In terms of assembly, in the presence of PdxS, forms a dodecamer of heterodimers. Only shows activity in the heterodimer.

It carries out the reaction aldehydo-D-ribose 5-phosphate + D-glyceraldehyde 3-phosphate + L-glutamine = pyridoxal 5'-phosphate + L-glutamate + phosphate + 3 H2O + H(+). The enzyme catalyses L-glutamine + H2O = L-glutamate + NH4(+). Its pathway is cofactor biosynthesis; pyridoxal 5'-phosphate biosynthesis. In terms of biological role, catalyzes the hydrolysis of glutamine to glutamate and ammonia as part of the biosynthesis of pyridoxal 5'-phosphate. The resulting ammonia molecule is channeled to the active site of PdxS. This is Pyridoxal 5'-phosphate synthase subunit PdxT from Staphylococcus epidermidis (strain ATCC 35984 / DSM 28319 / BCRC 17069 / CCUG 31568 / BM 3577 / RP62A).